Here is a 566-residue protein sequence, read N- to C-terminus: Putative sulfite reductase [NADPH] hemoprotein beta-component (566 aa).

[4Fe-4S] cluster is bound by residues Cys430, Cys436, Cys475, and Cys479. Cys479 lines the siroheme pocket.

The protein belongs to the nitrite and sulfite reductase 4Fe-4S domain family. Alpha(8)-beta(8). The alpha component is a flavoprotein, the beta component is a hemoprotein. It depends on siroheme as a cofactor. [4Fe-4S] cluster serves as cofactor.

It catalyses the reaction hydrogen sulfide + 3 NADP(+) + 3 H2O = sulfite + 3 NADPH + 4 H(+). It functions in the pathway sulfur metabolism; hydrogen sulfide biosynthesis; hydrogen sulfide from sulfite (NADPH route): step 1/1. In terms of biological role, component of the sulfite reductase complex that catalyzes the 6-electron reduction of sulfite to sulfide. This is one of several activities required for the biosynthesis of L-cysteine from sulfate. This Buchnera aphidicola subsp. Schizaphis graminum (strain Sg) protein is Putative sulfite reductase [NADPH] hemoprotein beta-component.